Reading from the N-terminus, the 334-residue chain is Proline-serine-threonine phosphatase-interacting protein 2 (334 aa).

Positions Ser4 to Asp264 constitute an F-BAR domain. The stretch at Gly66–Asn163 forms a coiled coil. The tract at residues Tyr288–Asp322 is disordered. A phosphotyrosine mark is found at Tyr323 and Tyr329.

Post-translationally, phosphorylated on tyrosine. As to expression, expressed in macrophage-containing tissues, including bone marrow, spleen, liver, kidney, intestine and brain.

It localises to the cytoplasm. The protein resides in the membrane. In terms of biological role, binds to F-actin. May be involved in regulation of the actin cytoskeleton. In Mus musculus (Mouse), this protein is Proline-serine-threonine phosphatase-interacting protein 2 (Pstpip2).